The chain runs to 99 residues: MAEGGFDPCECVCSHEHAMRRLINLLRQSQSYCTDTECLRELPGPSSDSGISITVILMAWMVIAMLLFLLRPPNLRGSSLPGKPSSPHSGQDPPAPPVD.

At 1–49 (MAEGGFDPCECVCSHEHAMRRLINLLRQSQSYCTDTECLRELPGPSSDS) the chain is on the lumenal side. A helical membrane pass occupies residues 50 to 70 (GISITVILMAWMVIAMLLFLL). At 71 to 99 (RPPNLRGSSLPGKPSSPHSGQDPPAPPVD) the chain is on the cytoplasmic side. The interval 77–99 (GSSLPGKPSSPHSGQDPPAPPVD) is disordered.

Ubiquitously expressed.

It is found in the endoplasmic reticulum membrane. The polypeptide is Small integral membrane protein 14 (Smim14) (Mus musculus (Mouse)).